A 378-amino-acid polypeptide reads, in one-letter code: Sperm microtubule associated protein 2 (378 aa).

2 disordered regions span residues 1–35 (MGEL…SDGS) and 47–79 (WLQS…LPEV). Over residues 47–56 (WLQSSQATTE) the composition is skewed to polar residues. The segment covering 61-77 (DPEEEIPPEEMVGEELP) has biased composition (acidic residues). 7 THEG repeats span residues 113–132 (AKCR…PKFN), 179–198 (TITV…PKRF), 217–236 (STLE…PKIR), 253–272 (AAQM…PRAP), 285–304 (PKPY…PKAL), 321–340 (VTKN…PKIR), and 355–374 (ASLV…PKHI). Phosphoserine is present on serine 290.

In terms of assembly, interacts with CCT5.

The protein localises to the nucleus. Functionally, may be involved (but not essential) in spermatogenesis. The polypeptide is Sperm microtubule associated protein 2 (Rattus norvegicus (Rat)).